The following is a 1439-amino-acid chain: Myomesin-3 (1439 aa).

The tract at residues Met-1 to Glu-57 is disordered. Residues His-22 to His-38 show a composition bias toward basic and acidic residues. A compositionally biased stretch (polar residues) spans Ser-39–Arg-48. Residues Gln-119–Cys-149 adopt a coiled-coil conformation. Ig-like C2-type domains lie at Pro-154–Leu-246 and Pro-269–Phe-362. Fibronectin type-III domains lie at Ser-376–Tyr-471, Ala-504–Lys-599, Pro-605–Ala-698, Ala-704–Trp-799, and Pro-806–Lys-901. 2 consecutive Ig-like C2-type domains span residues Pro-1122 to Thr-1207 and Ala-1336 to Ser-1425.

As to quaternary structure, homodimer. In terms of tissue distribution, mainly expressed in slow muscle, extraocular muscle and embryonic/neonatal skeletal muscle (at protein level). Expression in skeletal muscle is fiber type specific, with the highest levels in type IIA fibers (intermediate speed) and lower levels in type I fibers.

The protein localises to the cytoplasm. It is found in the myofibril. It localises to the sarcomere. The protein resides in the m line. In terms of biological role, may link the intermediate filament cytoskeleton to the M-disk of the myofibrils in striated muscle. This Mus musculus (Mouse) protein is Myomesin-3 (Myom3).